The chain runs to 504 residues: Probable ergothioneine transporter EgtUBC (504 aa).

Residues Met19–Leu198 form the ABC transmembrane type-1 domain. Helical transmembrane passes span Ile25–Thr45, Thr49–Leu69, Leu70–Val90, Ala145–Gly165, Ser178–Leu198, and Leu209–Phe229. The interval Gln231 to Lys504 is ergothioneine binding domain.

This sequence in the N-terminal section; belongs to the binding-protein-dependent transport system permease family. In the C-terminal section; belongs to the OsmX family. As to quaternary structure, the complex is probably composed of at least an ATP-binding protein (EgtUA) and a transmembrane protein (EgtUBC).

The protein resides in the membrane. In terms of biological role, part of an ABC transporter complex EgtU required for the uptake of ergothioneine (EGT), a natural low-molecular weight (LMW) thiol antioxidant. Responsible for the translocation of the substrate across the membrane. Also contains a C-terminal periplasmic solute-binding domain (SBD) which binds to EGT with sub-micromolar affinity. Probably does not bind L-hercynine. In Staphylococcus aureus (strain USA300), this protein is Probable ergothioneine transporter EgtUBC (egtUBC).